Consider the following 279-residue polypeptide: Proto-oncogene FRAT1 (279 aa).

2 disordered regions span residues 1–24 (MPCRREEEEEAGEEAEGEEEEEDS) and 56–76 (AQHSPASPCGPPGAPLRAPGP). Acidic residues predominate over residues 7–24 (EEEEAGEEAEGEEEEEDS). Serine 88 is subject to Phosphoserine. Disordered stretches follow at residues 136 to 200 (GPSA…DDPH) and 228 to 279 (RAKL…VPGS). Residues 198–220 (DPHRLLQQLVLSGNLIKEAVRRL) form an involved in GSK-3 binding region. Phosphoserine occurs at positions 249 and 252.

Belongs to the GSK-3-binding protein family. Binds DVL1. Binds GSK-3 and prevent GSK-3-dependent phosphorylation. Phosphorylated.

It localises to the cytoplasm. In terms of biological role, positively regulates the Wnt signaling pathway by stabilizing beta-catenin through the association with GSK-3. May play a role in tumor progression and collaborate with PIM1 and MYC in lymphomagenesis. This chain is Proto-oncogene FRAT1 (FRAT1), found in Homo sapiens (Human).